Consider the following 343-residue polypeptide: UDP-3-O-(3-hydroxymyristoyl)glucosamine N-acyltransferase (343 aa).

The active-site Proton acceptor is the His-239.

The protein belongs to the transferase hexapeptide repeat family. LpxD subfamily. In terms of assembly, homotrimer.

The enzyme catalyses a UDP-3-O-[(3R)-3-hydroxyacyl]-alpha-D-glucosamine + a (3R)-hydroxyacyl-[ACP] = a UDP-2-N,3-O-bis[(3R)-3-hydroxyacyl]-alpha-D-glucosamine + holo-[ACP] + H(+). It catalyses the reaction UDP-3-O-[(3R)-3-hydroxytetradecanoyl]-alpha-D-glucosamine + (3R)-hydroxytetradecanoyl-[ACP] = UDP-2-N,3-O-bis[(3R)-3-hydroxytetradecanoyl]-alpha-D-glucosamine + holo-[ACP] + H(+). The protein operates within glycolipid biosynthesis; lipid IV(A) biosynthesis; lipid IV(A) from (3R)-3-hydroxytetradecanoyl-[acyl-carrier-protein] and UDP-N-acetyl-alpha-D-glucosamine: step 3/6. Catalyzes the N-acylation of UDP-3-O-(hydroxytetradecanoyl)glucosamine using 3-hydroxytetradecanoyl-ACP as the acyl donor. Is involved in the biosynthesis of lipid A, a phosphorylated glycolipid that anchors the lipopolysaccharide to the outer membrane of the cell. The sequence is that of UDP-3-O-(3-hydroxymyristoyl)glucosamine N-acyltransferase from Blochmanniella pennsylvanica (strain BPEN).